Consider the following 227-residue polypeptide: Adapter protein MecA 1 (227 aa).

Belongs to the MecA family. As to quaternary structure, homodimer.

Enables the recognition and targeting of unfolded and aggregated proteins to the ClpC protease or to other proteins involved in proteolysis. Acts negatively in the development of competence by binding ComK and recruiting it to the ClpCP protease. When overexpressed, inhibits sporulation. Also involved in Spx degradation by ClpC. The sequence is that of Adapter protein MecA 1 (mecA1) from Bacillus cereus (strain ATCC 14579 / DSM 31 / CCUG 7414 / JCM 2152 / NBRC 15305 / NCIMB 9373 / NCTC 2599 / NRRL B-3711).